We begin with the raw amino-acid sequence, 174 residues long: Crossover junction endodeoxyribonuclease RuvC (174 aa).

Catalysis depends on residues Asp8, Glu69, and Asp141. Positions 8, 69, and 141 each coordinate Mg(2+).

Belongs to the RuvC family. Homodimer which binds Holliday junction (HJ) DNA. The HJ becomes 2-fold symmetrical on binding to RuvC with unstacked arms; it has a different conformation from HJ DNA in complex with RuvA. In the full resolvosome a probable DNA-RuvA(4)-RuvB(12)-RuvC(2) complex forms which resolves the HJ. It depends on Mg(2+) as a cofactor.

Its subcellular location is the cytoplasm. It catalyses the reaction Endonucleolytic cleavage at a junction such as a reciprocal single-stranded crossover between two homologous DNA duplexes (Holliday junction).. The RuvA-RuvB-RuvC complex processes Holliday junction (HJ) DNA during genetic recombination and DNA repair. Endonuclease that resolves HJ intermediates. Cleaves cruciform DNA by making single-stranded nicks across the HJ at symmetrical positions within the homologous arms, yielding a 5'-phosphate and a 3'-hydroxyl group; requires a central core of homology in the junction. The consensus cleavage sequence is 5'-(A/T)TT(C/G)-3'. Cleavage occurs on the 3'-side of the TT dinucleotide at the point of strand exchange. HJ branch migration catalyzed by RuvA-RuvB allows RuvC to scan DNA until it finds its consensus sequence, where it cleaves and resolves the cruciform DNA. The polypeptide is Crossover junction endodeoxyribonuclease RuvC (Xanthomonas oryzae pv. oryzae (strain MAFF 311018)).